The following is a 610-amino-acid chain: DNA mismatch repair protein MutL (610 aa).

It belongs to the DNA mismatch repair MutL/HexB family.

Functionally, this protein is involved in the repair of mismatches in DNA. It is required for dam-dependent methyl-directed DNA mismatch repair. May act as a 'molecular matchmaker', a protein that promotes the formation of a stable complex between two or more DNA-binding proteins in an ATP-dependent manner without itself being part of a final effector complex. The sequence is that of DNA mismatch repair protein MutL from Rickettsia africae (strain ESF-5).